The following is a 433-amino-acid chain: Xylose isomerase (433 aa).

Active-site residues include His97 and Asp100. The Mg(2+) site is built by Glu228, Glu264, His267, Asp292, Asp303, Asp305, and Asp334.

Belongs to the xylose isomerase family. In terms of assembly, homotetramer. The cofactor is Mg(2+).

The protein localises to the cytoplasm. It carries out the reaction alpha-D-xylose = alpha-D-xylulofuranose. This chain is Xylose isomerase, found in Fervidobacterium gondwanense.